Here is a 349-residue protein sequence, read N- to C-terminus: sn-glycerol-3-phosphate import ATP-binding protein UgpC (349 aa).

Residues 4–234 (ISLRDVRKSY…PATTFVAGFI (231 aa)) enclose the ABC transporter domain. 36–43 (GPSGCGKS) serves as a coordination point for ATP.

The protein belongs to the ABC transporter superfamily. sn-glycerol-3-phosphate importer (TC 3.A.1.1.3) family. In terms of assembly, the complex is composed of two ATP-binding proteins (UgpC), two transmembrane proteins (UgpA and UgpE) and a solute-binding protein (UgpB).

The protein localises to the cell inner membrane. The catalysed reaction is sn-glycerol 3-phosphate(out) + ATP + H2O = sn-glycerol 3-phosphate(in) + ADP + phosphate + H(+). Its function is as follows. Part of the ABC transporter complex UgpBAEC involved in sn-glycerol-3-phosphate (G3P) import. Responsible for energy coupling to the transport system. In Cereibacter sphaeroides (strain ATCC 17023 / DSM 158 / JCM 6121 / CCUG 31486 / LMG 2827 / NBRC 12203 / NCIMB 8253 / ATH 2.4.1.) (Rhodobacter sphaeroides), this protein is sn-glycerol-3-phosphate import ATP-binding protein UgpC.